Reading from the N-terminus, the 387-residue chain is Cysteine desulfurase (387 aa).

Pyridoxal 5'-phosphate is bound by residues 72–73 (GT), N152, Q180, and 200–202 (SAH). N6-(pyridoxal phosphate)lysine is present on K203. Residue T238 participates in pyridoxal 5'-phosphate binding. The Cysteine persulfide intermediate role is filled by C326. C326 contacts [2Fe-2S] cluster.

This sequence belongs to the class-V pyridoxal-phosphate-dependent aminotransferase family. NifS/IscS subfamily. In terms of assembly, homodimer. Pyridoxal 5'-phosphate serves as cofactor.

It carries out the reaction (sulfur carrier)-H + L-cysteine = (sulfur carrier)-SH + L-alanine. Functionally, catalyzes the removal of elemental sulfur atoms from cysteine to produce alanine. Seems to participate in the biosynthesis of the nitrogenase metalloclusters by providing the inorganic sulfur required for the Fe-S core formation. In Sinorhizobium fredii (strain NBRC 101917 / NGR234), this protein is Cysteine desulfurase.